The chain runs to 35 residues: Conotoxin Cal6.1c (35 aa).

Positions 1-35 (GLNRPSKRCLAGSAPCEFHKRSTCCSGHCIIWWCA) are excised as a propeptide. 3 cysteine pairs are disulfide-bonded: C9-C25, C16-C29, and C24-C34.

The protein belongs to the conotoxin O1 superfamily. As to expression, expressed by the venom duct.

Its subcellular location is the secreted. In terms of biological role, probable neurotoxin with unknown target. Possibly targets ion channels. This Californiconus californicus (California cone) protein is Conotoxin Cal6.1c.